The following is a 668-amino-acid chain: CLK4-associating serine/arginine rich protein (668 aa).

Phosphoserine is present on Ser-101. 2 disordered regions span residues 173 to 232 (AEVE…GMAD) and 252 to 668 (AKAL…HYRH). Positions 182-214 (PEEEESPAEEESNSDEDEVIPDIDVEVDVDELN) are enriched in acidic residues. Residues 265–283 (RRSRRQRREFREKRLRGRK) show a composition bias toward basic residues. Phosphoserine is present on residues Ser-285 and Ser-294. Residues 290-313 (ARRDSPTYDPYKRSPSESSSESRS) are compositionally biased toward basic and acidic residues. Thr-327 carries the phosphothreonine modification. Ser-331 and Ser-335 each carry phosphoserine. 2 stretches are compositionally biased toward low complexity: residues 340–353 (AAAAAAAAASGAAP) and 378–395 (SSSSASRTSSSRSSSRSS). Residues 396–435 (SRSRRGYYRSGRHARSRSRSWSRSRSRSRRYSRSRSRGRR) show a composition bias toward basic residues. The segment covering 436–446 (HSDGGSRDGHR) has biased composition (basic and acidic residues). Basic residues predominate over residues 475–486 (RGARGPRHHSSS). 2 stretches are compositionally biased toward low complexity: residues 487–510 (HSRSSWSLSPSRSRSVTRSGSRSQ) and 518–527 (QSHSQSQSHS). Ser-541 is modified (phosphoserine). A Phosphothreonine modification is found at Thr-567. Residues 579 to 641 (ALNRQFKADK…ERQYSRQSRS (63 aa)) are a coiled coil. 2 stretches are compositionally biased toward basic and acidic residues: residues 584–611 (FKADKKAAQEKMIQQEHERQEREDELRA) and 619–635 (KERERREKEREEWERQY). A compositionally biased stretch (low complexity) spans 636 to 645 (SRQSRSPSPR). Basic residues predominate over residues 653-668 (SRRRSRSRSRSPHYRH).

This sequence belongs to the splicing factor SR family. As to quaternary structure, probably interacts with CLK4. Phosphorylated in vitro by CLK4. In terms of tissue distribution, highly expressed in brain. Expressed at intermediate level in lung and liver. In brain, it is expressed in the hippocampus, cerebellum and olfactory bulb.

Its subcellular location is the nucleus. The protein localises to the nucleoplasm. In terms of biological role, probably functions as an alternative splicing regulator. May regulate the mRNA splicing of genes such as CLK1. May act by regulating members of the CLK kinase family. The protein is CLK4-associating serine/arginine rich protein (Clasrp) of Mus musculus (Mouse).